We begin with the raw amino-acid sequence, 30 residues long: Varv peptide G (30 aa).

The cyclopeptide (Gly-Asn) cross-link spans 1 to 30 (GVPVCGETCFGGTCNTPGCSCDPWPVCSRN). Intrachain disulfides connect cysteine 5–cysteine 19, cysteine 9–cysteine 21, and cysteine 14–cysteine 27.

Post-translationally, this is a cyclic peptide.

In terms of biological role, probably participates in a plant defense mechanism. This is Varv peptide G from Viola arvensis (European field pansy).